Here is a 413-residue protein sequence, read N- to C-terminus: Alpha-1-antitrypsin-like protein CM55-MS (413 aa).

The first 24 residues, 1-24, serve as a signal peptide directing secretion; sequence MPSSISWGLLLLAALSCLGPGSLA. Glutamine 25 is modified (pyrrolidone carboxylic acid). 4 N-linked (GlcNAc...) asparagine glycosylation sites follow: asparagine 65, asparagine 102, asparagine 165, and asparagine 266. The RCL stretch occupies residues 368–387; that stretch reads GATVGGITFMSRPKEVIFDR.

The protein belongs to the serpin family. In terms of tissue distribution, expressed in liver.

Its subcellular location is the secreted. Its function is as follows. Serine protease inhibitor. The sequence is that of Alpha-1-antitrypsin-like protein CM55-MS from Tamias sibiricus (Siberian chipmunk).